Here is a 349-residue protein sequence, read N- to C-terminus: Phosphate acyltransferase (349 aa).

The protein belongs to the PlsX family. As to quaternary structure, homodimer. Probably interacts with PlsY.

The protein localises to the cytoplasm. The catalysed reaction is a fatty acyl-[ACP] + phosphate = an acyl phosphate + holo-[ACP]. Its pathway is lipid metabolism; phospholipid metabolism. Catalyzes the reversible formation of acyl-phosphate (acyl-PO(4)) from acyl-[acyl-carrier-protein] (acyl-ACP). This enzyme utilizes acyl-ACP as fatty acyl donor, but not acyl-CoA. This Colwellia psychrerythraea (strain 34H / ATCC BAA-681) (Vibrio psychroerythus) protein is Phosphate acyltransferase.